The sequence spans 493 residues: 3-octaprenyl-4-hydroxybenzoate carboxy-lyase (493 aa).

Asparagine 172 contributes to the Mn(2+) binding site. Prenylated FMN is bound by residues 175-177, 189-191, and 194-195; these read IYR, RWL, and RG. Residue glutamate 238 participates in Mn(2+) binding. The active-site Proton donor is aspartate 287.

Belongs to the UbiD family. Homohexamer. It depends on prenylated FMN as a cofactor. Mn(2+) is required as a cofactor.

It localises to the cell membrane. The enzyme catalyses a 4-hydroxy-3-(all-trans-polyprenyl)benzoate + H(+) = a 2-(all-trans-polyprenyl)phenol + CO2. It functions in the pathway cofactor biosynthesis; ubiquinone biosynthesis. Catalyzes the decarboxylation of 3-octaprenyl-4-hydroxy benzoate to 2-octaprenylphenol, an intermediate step in ubiquinone biosynthesis. This is 3-octaprenyl-4-hydroxybenzoate carboxy-lyase from Shewanella denitrificans (strain OS217 / ATCC BAA-1090 / DSM 15013).